Here is a 509-residue protein sequence, read N- to C-terminus: Maturase K (509 aa).

It belongs to the intron maturase 2 family. MatK subfamily.

It localises to the plastid. The protein resides in the chloroplast. Functionally, usually encoded in the trnK tRNA gene intron. Probably assists in splicing its own and other chloroplast group II introns. The sequence is that of Maturase K from Stylosanthes hamata (Caribbean stylo).